Here is a 751-residue protein sequence, read N- to C-terminus: Protein CLMP1 (751 aa).

The segment covering 1 to 11 has biased composition (basic residues); that stretch reads MGKSGGRKKKS. The disordered stretch occupies residues 1 to 33; sequence MGKSGGRKKKSGGSNSNSSQVNSSETSGLSKPS. Over residues 12 to 28 the composition is skewed to low complexity; the sequence is GGSNSNSSQVNSSETSG. 3 TPR repeats span residues 51–84, 89–124, and 125–158; these read AHEL…IPKS, AVFH…QPGF, and TRAL…DPNH. The PB1 domain maps to 290 to 382; sequence WRPLKFVYDH…GMLRLHVVDV (93 aa). Residues 386 to 443 form a disordered region; it reads QEPMLLEEEEEEVEEKPVIEEVISSPTESLSETEINTEKTDKEVEKEKASSSEDPETK. Positions 390–399 are enriched in acidic residues; it reads LLEEEEEEVE. Positions 409 to 419 are enriched in polar residues; the sequence is SSPTESLSETE. Residues 421–443 show a composition bias toward basic and acidic residues; the sequence is NTEKTDKEVEKEKASSSEDPETK. TPR repeat units lie at residues 434–468, 481–514, and 536–570; these read ASSS…DPDA, SEAL…AFFN, and EVVA…KPDF. A compositionally biased stretch (basic and acidic residues) spans 630–648; it reads EQRMDDLKNPNSNKKEEVS. The interval 630–663 is disordered; sequence EQRMDDLKNPNSNKKEEVSKRRKKQGGDGNEEVS.

As to quaternary structure, interacts with myosin XI-K. Expressed in roots, stems, leaves, apex, flowers and seeds. Detected throughout the petiole in juvenile and young leaves, but restricted to the petiole midvein in older leaves. Expressed in hydathodes, at the base of the trichome, in the vascular cylinder of primary root and lateral root, in emerging lateral root primordia, in pollen and in developing embryos, but not in mature embryos.

It is found in the cytoplasm. In terms of biological role, required for plastid separation and partitioning during cell division. Not involved in plastid constriction or in the organization of cytoplasmic actin cables. Contributes to polar growth of root hairs. The protein is Protein CLMP1 of Arabidopsis thaliana (Mouse-ear cress).